The primary structure comprises 61 residues: Small ribosomal subunit protein uS14 (61 aa).

Zn(2+) is bound by residues Cys24, Cys27, Cys40, and Cys43.

It belongs to the universal ribosomal protein uS14 family. Zinc-binding uS14 subfamily. As to quaternary structure, part of the 30S ribosomal subunit. Contacts proteins S3 and S10. It depends on Zn(2+) as a cofactor.

Binds 16S rRNA, required for the assembly of 30S particles and may also be responsible for determining the conformation of the 16S rRNA at the A site. The sequence is that of Small ribosomal subunit protein uS14 from Nitratiruptor sp. (strain SB155-2).